The primary structure comprises 387 residues: Succinate--CoA ligase [ADP-forming] subunit beta (387 aa).

Residues 9–245 (KDLLESYGLK…KSQENAKELK (237 aa)) enclose the ATP-grasp domain. Residues Lys46, 53–55 (GRG), Glu100, Tyr103, and Glu108 each bind ATP. Positions 200 and 214 each coordinate Mg(2+). Substrate contacts are provided by residues Asn265 and 322-324 (GIV).

This sequence belongs to the succinate/malate CoA ligase beta subunit family. Heterotetramer of two alpha and two beta subunits. The cofactor is Mg(2+).

The enzyme catalyses succinate + ATP + CoA = succinyl-CoA + ADP + phosphate. It catalyses the reaction GTP + succinate + CoA = succinyl-CoA + GDP + phosphate. It functions in the pathway carbohydrate metabolism; tricarboxylic acid cycle; succinate from succinyl-CoA (ligase route): step 1/1. Succinyl-CoA synthetase functions in the citric acid cycle (TCA), coupling the hydrolysis of succinyl-CoA to the synthesis of either ATP or GTP and thus represents the only step of substrate-level phosphorylation in the TCA. The beta subunit provides nucleotide specificity of the enzyme and binds the substrate succinate, while the binding sites for coenzyme A and phosphate are found in the alpha subunit. The sequence is that of Succinate--CoA ligase [ADP-forming] subunit beta from Francisella tularensis subsp. holarctica (strain FTNF002-00 / FTA).